A 174-amino-acid chain; its full sequence is MAIVAVYPGTFDPLTNGHADLVQRSCRLFDRLIVAVAAYPSPSKRPAFTLDERLALAREVLKDMPGVEVEAFDTLLVDFVRARGATVILRGLRAVSDFEHEFQLASMNRQLIEEVETVFLTPAEQHAYISSSLVREVAALGGDVTRFVPPVVARALARRYSGPNRDGDGDGQGG.

Threonine 10 serves as a coordination point for substrate. ATP contacts are provided by residues 10 to 11 (TF) and histidine 18. Substrate is bound by residues lysine 44, leucine 76, and arginine 90. Residues 91–93 (GLR), glutamate 101, and 126–132 (HAYISSS) contribute to the ATP site.

The protein belongs to the bacterial CoaD family. In terms of assembly, homohexamer. Mg(2+) is required as a cofactor.

It localises to the cytoplasm. The enzyme catalyses (R)-4'-phosphopantetheine + ATP + H(+) = 3'-dephospho-CoA + diphosphate. The protein operates within cofactor biosynthesis; coenzyme A biosynthesis; CoA from (R)-pantothenate: step 4/5. Functionally, reversibly transfers an adenylyl group from ATP to 4'-phosphopantetheine, yielding dephospho-CoA (dPCoA) and pyrophosphate. The chain is Phosphopantetheine adenylyltransferase from Alkalilimnicola ehrlichii (strain ATCC BAA-1101 / DSM 17681 / MLHE-1).